A 490-amino-acid chain; its full sequence is 2,3-bisphosphoglycerate-independent phosphoglycerate mutase (490 aa).

The Mn(2+) site is built by Asp-9 and Ser-59. Residue Ser-59 is the Phosphoserine intermediate of the active site. Residues His-116, 145 to 146 (RD), Arg-175, Arg-181, 246 to 249 (RSDR), and Lys-319 each bind substrate. Residues Asp-385, His-389, Asp-426, His-427, and His-444 each contribute to the Mn(2+) site.

Belongs to the BPG-independent phosphoglycerate mutase family. As to quaternary structure, monomer. Mn(2+) serves as cofactor.

It carries out the reaction (2R)-2-phosphoglycerate = (2R)-3-phosphoglycerate. The protein operates within carbohydrate degradation; glycolysis; pyruvate from D-glyceraldehyde 3-phosphate: step 3/5. Its function is as follows. Catalyzes the interconversion of 2-phosphoglycerate and 3-phosphoglycerate. This Helicobacter hepaticus (strain ATCC 51449 / 3B1) protein is 2,3-bisphosphoglycerate-independent phosphoglycerate mutase.